The primary structure comprises 492 residues: Cobyric acid synthase (492 aa).

One can recognise a GATase cobBQ-type domain in the interval 253–441 (VLKVIAPVYP…LHGLFDTPQA (189 aa)). The Nucleophile role is filled by cysteine 334. The active site involves histidine 433.

It belongs to the CobB/CobQ family. CobQ subfamily.

Its pathway is cofactor biosynthesis; adenosylcobalamin biosynthesis. In terms of biological role, catalyzes amidations at positions B, D, E, and G on adenosylcobyrinic A,C-diamide. NH(2) groups are provided by glutamine, and one molecule of ATP is hydrogenolyzed for each amidation. This Azoarcus sp. (strain BH72) protein is Cobyric acid synthase.